Here is a 23-residue protein sequence, read N- to C-terminus: M-myrmeciitoxin-Mp2b (23 aa).

At Q23 the chain carries Glutamine amide.

It belongs to the formicidae venom precursor-01 superfamily. Ant pilosulin family. In terms of assembly, heterodimer with M-MIITX-Mp2a (pilosulin-3a) (AC Q26464); disulfide-linked. Only heterodimers (and not monomers) have been identified in the venom. In terms of tissue distribution, expressed by the venom gland.

The protein localises to the secreted. Functionally, heterodimer protein that may serve both defensive (pain-inducing) and predatory (insecticidal) roles. Has membrane-disrupting activity and shows induction of non-specific calcium influx into cells,. Shows broad-spectrum activity against a diverse range of bacteria, and cell lines, as well as hemolytic activity (EC(50)=2.18 uM). In vivo, shows moderate insecticidal activity against D.melanogaster and potent anthelmintic activity against the veterinary nematode H.contortus. In addition, intraplantar injection into mice induces nocifensive behavior and mechanical allodynia. The polypeptide is M-myrmeciitoxin-Mp2b (Myrmecia pilosula (Jack jumper ant)).